The sequence spans 311 residues: Meteorin-like protein (311 aa).

A compositionally biased stretch (low complexity) spans 1–13 (MRGAARAAWGRAG). The tract at residues 1–24 (MRGAARAAWGRAGQPWPRPPAPGP) is disordered. A signal peptide spans 1-45 (MRGAARAAWGRAGQPWPRPPAPGPPPPPLPLLLLLLAGLLGGAGA). Intrachain disulfides connect Cys52/Cys75, Cys107/Cys143, Cys188/Cys260, Cys191/Cys284, and Cys201/Cys306.

It belongs to the meteorin family. In terms of tissue distribution, highly expressed in the skeletal muscle, in subcutaneous adipose tissue, epididymal white adipose tissue depots and heart. Also expressed in brown adipose tissues and kidney.

It is found in the secreted. Functionally, hormone induced following exercise or cold exposure that promotes energy expenditure. Induced either in the skeletal muscle after exercise or in adipose tissue following cold exposure and is present in the circulation. Able to stimulate energy expenditure associated with the browning of the white fat depots and improves glucose tolerance. Does not promote an increase in a thermogenic gene program via direct action on adipocytes, but acts by stimulating several immune cell subtypes to enter the adipose tissue and activate their prothermogenic actions. Stimulates an eosinophil-dependent increase in IL4 expression and promotes alternative activation of adipose tissue macrophages, which are required for the increased expression of the thermogenic and anti-inflammatory gene programs in fat. Required for some cold-induced thermogenic responses, suggesting a role in metabolic adaptations to cold temperatures. In Homo sapiens (Human), this protein is Meteorin-like protein (METRNL).